The primary structure comprises 87 residues: UPF0250 protein CKO_02527 (87 aa).

Belongs to the UPF0250 family.

The polypeptide is UPF0250 protein CKO_02527 (Citrobacter koseri (strain ATCC BAA-895 / CDC 4225-83 / SGSC4696)).